We begin with the raw amino-acid sequence, 117 residues long: Small ribosomal subunit protein bS6 (117 aa).

The disordered stretch occupies residues 96 to 117; sequence KEAAAPAPKAAPVESAPAVEAE. Residues 99-117 show a composition bias toward low complexity; sequence AAPAPKAAPVESAPAVEAE.

Belongs to the bacterial ribosomal protein bS6 family.

Its function is as follows. Binds together with bS18 to 16S ribosomal RNA. In Geobacter sulfurreducens (strain ATCC 51573 / DSM 12127 / PCA), this protein is Small ribosomal subunit protein bS6.